A 1068-amino-acid chain; its full sequence is Carbamoyl phosphate synthase large chain (1068 aa).

A carboxyphosphate synthetic domain region spans residues 1–403 (MPKRTDINTI…SLQKALRGLE (403 aa)). ATP contacts are provided by arginine 129, arginine 169, glycine 175, glycine 176, glutamine 208, valine 210, glutamate 215, glycine 241, valine 242, histidine 243, glutamine 285, and glutamate 299. Residues 133–328 (KEAMEKIGLS…IAKVAAKLAV (196 aa)) enclose the ATP-grasp 1 domain. Mg(2+)-binding residues include glutamine 285, glutamate 299, and asparagine 301. 3 residues coordinate Mn(2+): glutamine 285, glutamate 299, and asparagine 301. Residues 404 to 548 (TGICGFNLMS…YSTYEEECES (145 aa)) are oligomerization domain. The segment at 549–930 (RPSDKKKIMI…AFLKAQLGAN (382 aa)) is carbamoyl phosphate synthetic domain. Residues 673-864 (QQILHKLHLK…LAKIAARVMA (192 aa)) enclose the ATP-grasp 2 domain. Positions 709, 748, 750, 755, 780, 781, 782, 783, 823, and 835 each coordinate ATP. Glutamine 823, glutamate 835, and asparagine 837 together coordinate Mg(2+). Mn(2+) contacts are provided by glutamine 823, glutamate 835, and asparagine 837. Residues 931 to 1068 (ERIPKTGKVF…SLQDLHQRLL (138 aa)) enclose the MGS-like domain. An allosteric domain region spans residues 931 to 1068 (ERIPKTGKVF…SLQDLHQRLL (138 aa)).

This sequence belongs to the CarB family. In terms of assembly, composed of two chains; the small (or glutamine) chain promotes the hydrolysis of glutamine to ammonia, which is used by the large (or ammonia) chain to synthesize carbamoyl phosphate. Tetramer of heterodimers (alpha,beta)4. It depends on Mg(2+) as a cofactor. Mn(2+) is required as a cofactor.

It catalyses the reaction hydrogencarbonate + L-glutamine + 2 ATP + H2O = carbamoyl phosphate + L-glutamate + 2 ADP + phosphate + 2 H(+). The enzyme catalyses hydrogencarbonate + NH4(+) + 2 ATP = carbamoyl phosphate + 2 ADP + phosphate + 2 H(+). It participates in amino-acid biosynthesis; L-arginine biosynthesis; carbamoyl phosphate from bicarbonate: step 1/1. It functions in the pathway pyrimidine metabolism; UMP biosynthesis via de novo pathway; (S)-dihydroorotate from bicarbonate: step 1/3. In terms of biological role, large subunit of the glutamine-dependent carbamoyl phosphate synthetase (CPSase). CPSase catalyzes the formation of carbamoyl phosphate from the ammonia moiety of glutamine, carbonate, and phosphate donated by ATP, constituting the first step of 2 biosynthetic pathways, one leading to arginine and/or urea and the other to pyrimidine nucleotides. The large subunit (synthetase) binds the substrates ammonia (free or transferred from glutamine from the small subunit), hydrogencarbonate and ATP and carries out an ATP-coupled ligase reaction, activating hydrogencarbonate by forming carboxy phosphate which reacts with ammonia to form carbamoyl phosphate. This is Carbamoyl phosphate synthase large chain from Pasteurella multocida (strain Pm70).